A 251-amino-acid polypeptide reads, in one-letter code: Malonyl-[acyl-carrier protein] O-methyltransferase (251 aa).

Belongs to the methyltransferase superfamily.

The enzyme catalyses malonyl-[ACP] + S-adenosyl-L-methionine = malonyl-[ACP] methyl ester + S-adenosyl-L-homocysteine. It participates in cofactor biosynthesis; biotin biosynthesis. Its function is as follows. Converts the free carboxyl group of a malonyl-thioester to its methyl ester by transfer of a methyl group from S-adenosyl-L-methionine (SAM). It allows to synthesize pimeloyl-ACP via the fatty acid synthetic pathway. This chain is Malonyl-[acyl-carrier protein] O-methyltransferase, found in Enterobacter lignolyticus (strain SCF1).